We begin with the raw amino-acid sequence, 456 residues long: Adenylosuccinate lyase (456 aa).

N(6)-(1,2-dicarboxyethyl)-AMP contacts are provided by residues 15–16 (RY), 90–92 (NHD), and 122–123 (TS). Catalysis depends on His171, which acts as the Proton donor/acceptor. Gln247 serves as a coordination point for N(6)-(1,2-dicarboxyethyl)-AMP. Ser295 (proton donor/acceptor) is an active-site residue. Residues Ser296, 301–303 (KVN), Asn309, Arg335, and 340–344 (STVLR) contribute to the N(6)-(1,2-dicarboxyethyl)-AMP site.

Belongs to the lyase 1 family. Adenylosuccinate lyase subfamily. In terms of assembly, homotetramer. Residues from neighboring subunits contribute catalytic and substrate-binding residues to each active site.

The enzyme catalyses N(6)-(1,2-dicarboxyethyl)-AMP = fumarate + AMP. It catalyses the reaction (2S)-2-[5-amino-1-(5-phospho-beta-D-ribosyl)imidazole-4-carboxamido]succinate = 5-amino-1-(5-phospho-beta-D-ribosyl)imidazole-4-carboxamide + fumarate. The protein operates within purine metabolism; AMP biosynthesis via de novo pathway; AMP from IMP: step 2/2. Its pathway is purine metabolism; IMP biosynthesis via de novo pathway; 5-amino-1-(5-phospho-D-ribosyl)imidazole-4-carboxamide from 5-amino-1-(5-phospho-D-ribosyl)imidazole-4-carboxylate: step 2/2. Its function is as follows. Catalyzes two reactions in de novo purine nucleotide biosynthesis. Catalyzes the breakdown of 5-aminoimidazole- (N-succinylocarboxamide) ribotide (SAICAR or 2-[5-amino-1-(5-phospho-beta-D-ribosyl)imidazole-4-carboxamido]succinate) to 5-aminoimidazole-4-carboxamide ribotide (AICAR or 5-amino-1-(5-phospho-beta-D-ribosyl)imidazole-4-carboxamide) and fumarate, and of adenylosuccinate (ADS or N(6)-(1,2-dicarboxyethyl)-AMP) to adenosine monophosphate (AMP) and fumarate. In Haemophilus influenzae (strain ATCC 51907 / DSM 11121 / KW20 / Rd), this protein is Adenylosuccinate lyase (purB).